Here is a 409-residue protein sequence, read N- to C-terminus: Putative actin-fragmin kinase DDB_G0268812 (409 aa).

Residues 1–45 are disordered; sequence MKTFRDFKKKIKNNNNNKNNKNNNINNNNSNNNKNNKNNNNNNSN. Residues 5 to 46 are a coiled coil; it reads RDFKKKIKNNNNNKNNKNNNINNNNSNNNKNNKNNNNNNSNN. Residues 13-45 show a composition bias toward low complexity; sequence NNNNNKNNKNNNINNNNSNNNKNNKNNNNNNSN.

It belongs to the protein kinase superfamily. AFK Ser/Thr protein kinase family.

This Dictyostelium discoideum (Social amoeba) protein is Putative actin-fragmin kinase DDB_G0268812.